Consider the following 399-residue polypeptide: Bone morphogenetic protein 8B (399 aa).

The signal sequence occupies residues Met1 to Gly19. A propeptide spanning residues Gly20–Arg260 is cleaved from the precursor. Asn155 and Asn340 each carry an N-linked (GlcNAc...) asparagine glycan. 3 cysteine pairs are disulfide-bonded: Cys298/Cys364, Cys327/Cys396, and Cys331/Cys398.

The protein belongs to the TGF-beta family. As to quaternary structure, homodimer; disulfide-linked. Expressed in testis. Expressed in decidual cells of the uterus and in trophoblast cells of the labyrinthine region of the placenta and in the inner root sheath of hair follicles of early postnatal skin. Expressed in the extraembryonic ectoderm in pregastrula and gastrula stage mouse embryos. Expressed in brown adipose tissue and brain.

Its subcellular location is the secreted. In terms of biological role, induces cartilage and bone formation. May be the osteoinductive factor responsible for the phenomenon of epithelial osteogenesis. Plays a role in calcium regulation and bone homeostasis. Involved in the generation of primordial germ cells; this function involves Bmp4 in a synergistic manner though separate receptor complexes seem to be involved. Required for the initiation and maintenance of spermatogenesis. Signaling protein involved in regulation of thermogenesis and energy balance. Proposed to increase the peripheral response of brown adipose tissue (BAT) to adrenergic stimulation while acting centrally in the hypothalamus to increase sympathetic output to BAT. This Mus musculus (Mouse) protein is Bone morphogenetic protein 8B (Bmp8b).